Consider the following 243-residue polypeptide: UPF0688 protein C1orf174 (243 aa).

Disordered stretches follow at residues 78–100 and 132–243; these read NDSASLPKVTPETPCENEFAEGS and LAKT…DAEM. Residues 145–157 show a composition bias toward low complexity; sequence SAGSGAEESNSSS. A phosphoserine mark is found at serine 148 and serine 189. The span at 233-243 shows a compositional bias: acidic residues; it reads DDDDDDDDAEM.

This sequence belongs to the UPF0688 family.

It is found in the nucleus. The chain is UPF0688 protein C1orf174 (C1orf174) from Homo sapiens (Human).